A 441-amino-acid chain; its full sequence is Cytochrome c biogenesis protein Ccs1 (441 aa).

3 consecutive transmembrane segments (helical) span residues 19-39 (LKLA…GTVI), 78-98 (TWWF…CTLA), and 164-184 (IGPI…LLGN).

Belongs to the Ccs1/CcsB family. As to quaternary structure, may interact with CcsA.

It localises to the plastid. The protein resides in the chloroplast thylakoid membrane. Functionally, required during biogenesis of c-type cytochromes (cytochrome c6 and cytochrome f) at the step of heme attachment. In Rhodomonas salina (Cryptomonas salina), this protein is Cytochrome c biogenesis protein Ccs1.